An 867-amino-acid chain; its full sequence is Alanine--tRNA ligase (867 aa).

Zn(2+) is bound by residues H558, H562, C660, and H664.

It belongs to the class-II aminoacyl-tRNA synthetase family. Zn(2+) serves as cofactor.

It is found in the cytoplasm. The enzyme catalyses tRNA(Ala) + L-alanine + ATP = L-alanyl-tRNA(Ala) + AMP + diphosphate. Its function is as follows. Catalyzes the attachment of alanine to tRNA(Ala) in a two-step reaction: alanine is first activated by ATP to form Ala-AMP and then transferred to the acceptor end of tRNA(Ala). Also edits incorrectly charged Ser-tRNA(Ala) and Gly-tRNA(Ala) via its editing domain. The chain is Alanine--tRNA ligase from Fervidobacterium nodosum (strain ATCC 35602 / DSM 5306 / Rt17-B1).